A 478-amino-acid chain; its full sequence is Chromosomal replication initiator protein DnaA (478 aa).

The interval 1-90 (MSVELWQQCV…KRSSAPRAVQ (90 aa)) is domain I, interacts with DnaA modulators. The interval 91 to 141 (PASPPPAVVQAAPVAIEEASAARTVDAQPVAPATVRTERSVQVEGGLKHTS) is domain II. The interval 142–358 (YLNRAFTFEN…GALKRVIAHS (217 aa)) is domain III, AAA+ region. Gly186, Gly188, Lys189, and Thr190 together coordinate ATP. The segment at 359–478 (HFTNHPITIE…YKNLLRTLTT (120 aa)) is domain IV, binds dsDNA.

This sequence belongs to the DnaA family. As to quaternary structure, oligomerizes as a right-handed, spiral filament on DNA at oriC.

It localises to the cytoplasm. Functionally, plays an essential role in the initiation and regulation of chromosomal replication. ATP-DnaA binds to the origin of replication (oriC) to initiate formation of the DNA replication initiation complex once per cell cycle. Binds the DnaA box (a 9 base pair repeat at the origin) and separates the double-stranded (ds)DNA. Forms a right-handed helical filament on oriC DNA; dsDNA binds to the exterior of the filament while single-stranded (ss)DNA is stabiized in the filament's interior. The ATP-DnaA-oriC complex binds and stabilizes one strand of the AT-rich DNA unwinding element (DUE), permitting loading of DNA polymerase. After initiation quickly degrades to an ADP-DnaA complex that is not apt for DNA replication. Binds acidic phospholipids. This chain is Chromosomal replication initiator protein DnaA, found in Azotobacter vinelandii (strain DJ / ATCC BAA-1303).